Reading from the N-terminus, the 251-residue chain is Ribosomal RNA small subunit methyltransferase J (251 aa).

S-adenosyl-L-methionine-binding positions include 100 to 101 (RD), 116 to 117 (ER), and Asp-170.

Belongs to the methyltransferase superfamily. RsmJ family.

The protein localises to the cytoplasm. It catalyses the reaction guanosine(1516) in 16S rRNA + S-adenosyl-L-methionine = N(2)-methylguanosine(1516) in 16S rRNA + S-adenosyl-L-homocysteine + H(+). Specifically methylates the guanosine in position 1516 of 16S rRNA. The chain is Ribosomal RNA small subunit methyltransferase J from Actinobacillus pleuropneumoniae serotype 5b (strain L20).